Consider the following 382-residue polypeptide: tRNA (guanine(26)-N(2))-dimethyltransferase (382 aa).

The Trm1 methyltransferase domain maps to 4 to 370 (TEVIEGKARL…REFSEILECV (367 aa)). 5 residues coordinate S-adenosyl-L-methionine: arginine 44, arginine 69, aspartate 87, aspartate 113, and alanine 114. Residues cysteine 244, cysteine 247, cysteine 261, and cysteine 264 each coordinate Zn(2+).

It belongs to the class I-like SAM-binding methyltransferase superfamily. Trm1 family.

The enzyme catalyses guanosine(26) in tRNA + 2 S-adenosyl-L-methionine = N(2)-dimethylguanosine(26) in tRNA + 2 S-adenosyl-L-homocysteine + 2 H(+). Its function is as follows. Dimethylates a single guanine residue at position 26 of a number of tRNAs using S-adenosyl-L-methionine as donor of the methyl groups. In Metallosphaera sedula (strain ATCC 51363 / DSM 5348 / JCM 9185 / NBRC 15509 / TH2), this protein is tRNA (guanine(26)-N(2))-dimethyltransferase.